Consider the following 189-residue polypeptide: Large ribosomal subunit protein bL9 (189 aa).

Belongs to the bacterial ribosomal protein bL9 family.

Binds to the 23S rRNA. This Cereibacter sphaeroides (strain KD131 / KCTC 12085) (Rhodobacter sphaeroides) protein is Large ribosomal subunit protein bL9.